A 1512-amino-acid polypeptide reads, in one-letter code: Bifunctional glutamate/proline--tRNA ligase (1512 aa).

Positions 164 to 759 (GTKWDVSGNR…SSVLYSRVAV (596 aa)) are glutamate--tRNA ligase. The 'HIGH' region motif lies at 204–214 (PEASGYLHIGH). Residues 294–315 (TPAEQMKAEREQRTESKHRKNS) are disordered. A compositionally biased stretch (basic and acidic residues) spans 299–308 (MKAEREQRTE). Position 300 is an N6-acetyllysine; alternate (Lys-300). Lys-300 is subject to N6-malonyllysine; alternate. Thr-355 bears the Phosphothreonine mark. Lys-417 is subject to N6-acetyllysine. The 'KMSKS' region signature appears at 432 to 436 (VLSKR). Ser-434 carries the phosphoserine modification. N6-acetyllysine is present on residues Lys-498, Lys-535, Lys-542, and Lys-637. Basic and acidic residues predominate over residues 709–736 (EMPTSGSKEKTKVEISKKETSSAPKERP). A disordered region spans residues 709–742 (EMPTSGSKEKTKVEISKKETSSAPKERPAPAVSS). Positions 749 to 805 (DSSVLYSRVAVQGDVVRELKAKKAPKEDIDAAVKQLLTLKAEYKEKTGQEYKPGNPS) constitute a WHEP-TRS 1 domain. The tract at residues 760–956 (QGDVVRELKA…GIEYKPVSAT (197 aa)) is 3 X 57 AA approximate repeats. An N6-acetyllysine modification is found at Lys-788. The tract at residues 795 to 819 (TGQEYKPGNPSAAAVQTVSTKSSSN) is disordered. Residues 808–819 (AVQTVSTKSSSN) show a composition bias toward polar residues. The region spanning 822 to 878 (ESTSLYNKVAAQGEVVRKLKAEKAPKAKVTEAVECLLSLKAEYKEKTGKDYVPGQPP) is the WHEP-TRS 2 domain. Lys-861 carries the post-translational modification N6-acetyllysine. Disordered regions lie at residues 869–898 (GKDY…GAEK) and 956–1011 (TGAE…PKKQ). Tyr-872 is subject to Phosphotyrosine. Polar residues predominate over residues 878–892 (PASQNSHSNPVSNAQ). Ser-885 carries the post-translational modification Phosphoserine. The WHEP-TRS 3 domain maps to 900-956 (EAKVLFDRVACQGEVVRKLKAEKASKDQVDSAVQELLQLKAQYKSLTGIEYKPVSAT). Basic and acidic residues predominate over residues 958–976 (AEDKDKKKKEKENKSEKQN). The segment covering 997-1006 (LSSGGAGEGQ) has biased composition (gly residues). Residue Ser-998 is modified to Phosphoserine. At Ser-999 the chain carries Phosphoserine; by RPS6KB1. Residues 1007-1512 (GPKKQTRLGL…KFYTLFGRSY (506 aa)) are proline--tRNA ligase. L-proline contacts are provided by residues 1121–1123 (TSE) and Arg-1152. ATP contacts are provided by Arg-1152, Glu-1154, Arg-1163, Thr-1164, Gln-1237, and Thr-1240. An Omega-N-methylarginine modification is found at Arg-1152. Gln-1237 serves as a coordination point for Mg(2+). His-1242 provides a ligand contact to L-proline. Residues Thr-1276 and Arg-1278 each coordinate ATP. Phosphoserine is present on Ser-1350. Zn(2+) is bound by residues Cys-1448, Cys-1453, Cys-1495, and Cys-1497. Lys-1503 carries the post-translational modification N6-acetyllysine.

This sequence in the N-terminal section; belongs to the class-I aminoacyl-tRNA synthetase family. Glutamate--tRNA ligase type 2 subfamily. In the C-terminal section; belongs to the class-II aminoacyl-tRNA synthetase family. As to quaternary structure, homodimer. Part of the aminoacyl-tRNA synthetase multienzyme complex, also know as multisynthetase complex, that is composed of the tRNA ligases for Arg (RARS1), Asp (DARS1), Gln (QARS1), Ile (IARS1), Leu (LARS1), Lys (KARS1), Met (MARS1) the bifunctional ligase for Glu and Pro (EPRS1) and the auxiliary subunits AIMP1/p43, AIMP2/p38 and EEF1E1/p18. Forms a linear complex that contains MARS1, EEF1E1, EPRS1 and AIMP2 that is at the core of the multisubunit complex. Interacts with TARS3. Interacts with DUS2L. Component of the GAIT complex which is composed of EPRS1, RPL13A and GAPDH. Interacts (phosphorylated at Ser-999) with SLC27A1; mediates the translocation of SLC27A1 from the cytoplasm to the plasma membrane thereby increasing the uptake of long-chain fatty acids. Phosphorylated at Ser-999 by RPS6KB1; triggers EPRS1 release from the aminoacyl-tRNA synthetase multienzyme complex. In monocytes, the IFN-gamma-induced phosphorylation at Ser-999 releases EPRS1 from the aminoacyl-tRNA synthetase multienzyme complex, allowing its association with the GAIT complex. Phosphorylation at Ser-999 is specifically required for the RPL13A-mediated interaction of the GAIT complex with eIF4G. Phosphorylation at Ser-999 by RPS6KB1, is also induced by insulin through activation of the mTORC1 signaling pathway and promotes the interaction of EPRS1 with SLC27A1.

It is found in the cytoplasm. The protein localises to the cytosol. The protein resides in the membrane. The catalysed reaction is tRNA(Glu) + L-glutamate + ATP = L-glutamyl-tRNA(Glu) + AMP + diphosphate. It carries out the reaction tRNA(Pro) + L-proline + ATP = L-prolyl-tRNA(Pro) + AMP + diphosphate. Functionally, multifunctional protein which primarily functions within the aminoacyl-tRNA synthetase multienzyme complex, also known as multisynthetase complex. Within the complex it catalyzes the attachment of both L-glutamate and L-proline to their cognate tRNAs in a two-step reaction where the amino acid is first activated by ATP to form a covalent intermediate with AMP. Subsequently, the activated amino acid is transferred to the acceptor end of the cognate tRNA to form L-glutamyl-tRNA(Glu) and L-prolyl-tRNA(Pro). Upon interferon-gamma stimulation, EPRS1 undergoes phosphorylation, causing its dissociation from the aminoacyl-tRNA synthetase multienzyme complex. It is recruited to form the GAIT complex, which binds to stem loop-containing GAIT elements found in the 3'-UTR of various inflammatory mRNAs, such as ceruloplasmin. The GAIT complex inhibits the translation of these mRNAs, allowing interferon-gamma to redirect the function of EPRS1 from protein synthesis to translation inhibition in specific cell contexts. Furthermore, it can function as a downstream effector in the mTORC1 signaling pathway, by promoting the translocation of SLC27A1 from the cytoplasm to the plasma membrane where it mediates the uptake of long-chain fatty acid by adipocytes. Thereby, EPRS1 also plays a role in fat metabolism and more indirectly influences lifespan. The polypeptide is Bifunctional glutamate/proline--tRNA ligase (Mus musculus (Mouse)).